We begin with the raw amino-acid sequence, 380 residues long: Chaperone protein DnaJ (380 aa).

The 66-residue stretch at 5 to 70 (DYYEVLGLQK…EKRAAYDQYG (66 aa)) folds into the J domain. The segment at 136–214 (GCKKDIRIST…CHGDGRVQKA (79 aa)) adopts a CR-type zinc-finger fold. Zn(2+) contacts are provided by cysteine 149, cysteine 152, cysteine 166, cysteine 169, cysteine 188, cysteine 191, cysteine 202, and cysteine 205. CXXCXGXG motif repeat units lie at residues 149–156 (CDTCHGSG), 166–173 (CSHCHGSG), 188–195 (CPSCHGSG), and 202–209 (CKSCHGDG).

It belongs to the DnaJ family. In terms of assembly, homodimer. It depends on Zn(2+) as a cofactor.

The protein resides in the cytoplasm. Functionally, participates actively in the response to hyperosmotic and heat shock by preventing the aggregation of stress-denatured proteins and by disaggregating proteins, also in an autonomous, DnaK-independent fashion. Unfolded proteins bind initially to DnaJ; upon interaction with the DnaJ-bound protein, DnaK hydrolyzes its bound ATP, resulting in the formation of a stable complex. GrpE releases ADP from DnaK; ATP binding to DnaK triggers the release of the substrate protein, thus completing the reaction cycle. Several rounds of ATP-dependent interactions between DnaJ, DnaK and GrpE are required for fully efficient folding. Also involved, together with DnaK and GrpE, in the DNA replication of plasmids through activation of initiation proteins. This is Chaperone protein DnaJ from Actinobacillus pleuropneumoniae serotype 5b (strain L20).